Here is a 106-residue protein sequence, read N- to C-terminus: Putative double-stranded DNA mimic protein PM0536 (106 aa).

Belongs to the putative dsDNA mimic protein family.

Functionally, may act as a double-stranded DNA (dsDNA) mimic. Probably regulates the activity of a dsDNA-binding protein. This Pasteurella multocida (strain Pm70) protein is Putative double-stranded DNA mimic protein PM0536.